The primary structure comprises 491 residues: MKYADLREFIAQLEQKQLLKRIKTPVSPHLEMTEIGDRVLKAGGPALLFEQPVDNGRRYDFPVLANLFGTPERVAMGMGADDVMQLREIGRTLAYLKEPEPPKGLKDAWDKLPLLKQVLSMAPKEVKKAPCQDIVWEGEAVDLGKLPIQHCWPGDAAPLITWGLTVTRGPNKKRQNLGIYRQQVIGKNRVIMRWLAHRGGALDYREFRQQNPDTPYPVAVVLGCDPATILGAVTPVPDTLSEYQFAGLLRGSRTELAQCLGSDLQVPARAEIVLEGHIHPNDMALEGPYGDHTGYYNEQDSFPVLTIDRITMRENPIYHSTYTGKPPDEPAILGVALNEVFVPILQKQFPEIVDFYLPPEGCSYRMAIVSIKKQYPGHAKRVMMGCWSFLRQFMYTKFIVVVDDDVNTRDWKEVIWAITTRMDPVRDTTLIDHTPIDYLDFASPISGLGGKMGLDATNKMPGETSREWGTPIVMDDAVKARVDALWSELGL.

Residue N176 participates in Mn(2+) binding. Residues 179 to 181 (IYR), 193 to 195 (RWL), and 198 to 199 (RG) each bind prenylated FMN. Position 242 (E242) interacts with Mn(2+). D291 serves as the catalytic Proton donor.

The protein belongs to the UbiD family. In terms of assembly, homohexamer. Requires prenylated FMN as cofactor. Mn(2+) serves as cofactor.

It localises to the cell membrane. The enzyme catalyses a 4-hydroxy-3-(all-trans-polyprenyl)benzoate + H(+) = a 2-(all-trans-polyprenyl)phenol + CO2. It functions in the pathway cofactor biosynthesis; ubiquinone biosynthesis. Its function is as follows. Catalyzes the decarboxylation of 3-octaprenyl-4-hydroxy benzoate to 2-octaprenylphenol, an intermediate step in ubiquinone biosynthesis. The sequence is that of 3-octaprenyl-4-hydroxybenzoate carboxy-lyase from Chromobacterium violaceum (strain ATCC 12472 / DSM 30191 / JCM 1249 / CCUG 213 / NBRC 12614 / NCIMB 9131 / NCTC 9757 / MK).